Reading from the N-terminus, the 207-residue chain is Large ribosomal subunit protein bL25 (207 aa).

Residues 171–207 (ESVVTVEVPEDATESTTAPEAAAAPADAAAAPAADAK) form a disordered region. Over residues 184-207 (ESTTAPEAAAAPADAAAAPAADAK) the composition is skewed to low complexity.

It belongs to the bacterial ribosomal protein bL25 family. CTC subfamily. Part of the 50S ribosomal subunit; part of the 5S rRNA/L5/L18/L25 subcomplex. Contacts the 5S rRNA. Binds to the 5S rRNA independently of L5 and L18.

Its function is as follows. This is one of the proteins that binds to the 5S RNA in the ribosome where it forms part of the central protuberance. In Bifidobacterium longum subsp. infantis (strain ATCC 15697 / DSM 20088 / JCM 1222 / NCTC 11817 / S12), this protein is Large ribosomal subunit protein bL25.